The following is a 1287-amino-acid chain: Rho GTPase-activating protein 33 (1287 aa).

The interval 1–40 (MVARSTDSLDGPGEGSVQPLPTAGGPSVKGKPGKRLSAPR) is disordered. Serine 8 is subject to Phosphoserine. Positions 59–168 (FGHIQLLLSP…CGPVLTWMEL (110 aa)) constitute a PX; atypical domain. The 63-residue stretch at 186–248 (PAVAAAHVIK…PSECVELFTE (63 aa)) folds into the SH3 domain. Residues 315–510 (CDLGEHLSNS…FLLTHVDVLF (196 aa)) form the Rho-GAP domain. 6 disordered regions span residues 551–792 (RTQG…SPAA), 813–832 (AGGAPASATPTPALSPGRSL), 859–1030 (KLRG…VPTP), 1056–1075 (GPPSFQPSSPAPVWRSSLGP), 1090–1134 (GASE…SPDF), and 1146–1287 (PPDH…RSYC). Positions 558-571 (TPTEPTTPKAPASP) are enriched in low complexity. The residue at position 570 (serine 570) is a Phosphoserine. A compositionally biased stretch (basic and acidic residues) spans 572-584 (AERRKGERGEKQR). Residues 622–645 (SGSRPDTVTLRSAKSEESLSSQAS) are compositionally biased toward polar residues. Serine 636 bears the Phosphoserine mark. Positions 672–709 (AGSCESLSSSSSSESSSSESSSSSSESSAAGLGALSGS) are enriched in low complexity. Residue serine 727 is modified to Phosphoserine. The segment covering 752–766 (PGDPAPPASPAPPAP) has biased composition (pro residues). Composition is skewed to low complexity over residues 813–829 (AGGAPASATPTPALSPG) and 896–919 (PARLMALALAERAQQVAEQQSQQE). Polar residues-rich tracts occupy residues 972–981 (RQQSDGSLLR) and 1019–1028 (SPCSVPSQVP). Phosphotyrosine is present on tyrosine 1169. Residues 1175 to 1189 (GPRGPSPASSSSSSP) show a composition bias toward low complexity. Arginine 1244 carries the omega-N-methylarginine modification. The span at 1274–1287 (SWSLHSEGQTRSYC) shows a compositional bias: polar residues.

Belongs to the PX domain-containing GAP family. In terms of assembly, specifically interacts with CDC42 and RHOQ/TC10 through its Rho-GAP domain. Interacts with NEK6.

In terms of biological role, may be involved in several stages of intracellular trafficking. Could play an important role in the regulation of glucose transport by insulin. May act as a downstream effector of RHOQ/TC10 in the regulation of insulin-stimulated glucose transport. The sequence is that of Rho GTPase-activating protein 33 (ARHGAP33) from Homo sapiens (Human).